We begin with the raw amino-acid sequence, 397 residues long: Probable sugar efflux transporter (397 aa).

12 helical membrane-spanning segments follow: residues valine 15–leucine 35, valine 50–leucine 70, leucine 81–phenylalanine 101, valine 103–alanine 123, alanine 136–isoleucine 156, threonine 169–proline 189, proline 209–tyrosine 229, phenylalanine 246–glycine 266, proline 275–alanine 295, leucine 301–valine 321, valine 333–glycine 353, and threonine 364–phenylalanine 384.

The protein belongs to the major facilitator superfamily. SotB (TC 2.A.1.2) family.

The protein resides in the cell inner membrane. Involved in the efflux of sugars. The physiological role may be the reduction of the intracellular concentration of toxic sugars or sugar metabolites. The protein is Probable sugar efflux transporter of Citrobacter koseri (strain ATCC BAA-895 / CDC 4225-83 / SGSC4696).